Here is a 407-residue protein sequence, read N- to C-terminus: Arginine biosynthesis bifunctional protein ArgJ (407 aa).

Residues Thr157, Lys183, Thr194, Glu280, Asn402, and Thr407 each contribute to the substrate site. Thr194 (nucleophile) is an active-site residue.

This sequence belongs to the ArgJ family. Heterotetramer of two alpha and two beta chains.

The protein localises to the cytoplasm. The catalysed reaction is N(2)-acetyl-L-ornithine + L-glutamate = N-acetyl-L-glutamate + L-ornithine. It catalyses the reaction L-glutamate + acetyl-CoA = N-acetyl-L-glutamate + CoA + H(+). It participates in amino-acid biosynthesis; L-arginine biosynthesis; L-ornithine and N-acetyl-L-glutamate from L-glutamate and N(2)-acetyl-L-ornithine (cyclic): step 1/1. It functions in the pathway amino-acid biosynthesis; L-arginine biosynthesis; N(2)-acetyl-L-ornithine from L-glutamate: step 1/4. In terms of biological role, catalyzes two activities which are involved in the cyclic version of arginine biosynthesis: the synthesis of N-acetylglutamate from glutamate and acetyl-CoA as the acetyl donor, and of ornithine by transacetylation between N(2)-acetylornithine and glutamate. The polypeptide is Arginine biosynthesis bifunctional protein ArgJ (Bacillus anthracis).